Reading from the N-terminus, the 873-residue chain is Disks large homolog 1 (873 aa).

The L27 domain occupies 4–64 (RQKDAQRALQ…YYEVSLQDTE (61 aa)). A disordered region spans residues 62–135 (DTEDKPIEDS…SPHIPGDARP (74 aa)). Residues 63-77 (TEDKPIEDSSLKSRE) are compositionally biased toward basic and acidic residues. Over residues 85 to 96 (WNLSVPPSTTGP) the composition is skewed to polar residues. 2 consecutive PDZ domains span residues 230 to 317 (EITL…RRRK) and 325 to 412 (DVKL…AKPT). A compositionally biased stretch (polar residues) spans 441 to 456 (SYLSQPLTPATPSRYS). Positions 441 to 464 (SYLSQPLTPATPSRYSPVSKGMLG) are disordered. Residues 474 to 555 (KIVLHRGTTG…TVTIIAQYRP (82 aa)) enclose the PDZ 3 domain. The segment at 636-662 (NKDSGEQDTSDVDQHVTSNASDSESSF) is disordered. Residues 650-662 (HVTSNASDSESSF) show a composition bias toward polar residues. One can recognise a Guanylate kinase-like domain in the interval 683–858 (SRPVIILGPM…IYNQVKQIIE (176 aa)).

This sequence belongs to the MAGUK family.

The protein resides in the cell membrane. It is found in the endoplasmic reticulum membrane. The protein localises to the cell junction. It localises to the apical cell membrane. Its function is as follows. Essential multidomain scaffolding protein required for normal development. Recruits channels, receptors and signaling molecules to discrete plasma membrane domains in polarized cells. Promotes epithelial cell layer barrier function via maintaining cell-cell adhesion. May play a role in adherens junction assembly, signal transduction and cell proliferation. May play a role in synapse assembly and function. The polypeptide is Disks large homolog 1 (dlg1) (Danio rerio (Zebrafish)).